A 216-amino-acid polypeptide reads, in one-letter code: 1-Cys peroxiredoxin PER1 (216 aa).

One can recognise a Thioredoxin domain in the interval 4 to 159 (ITLGDTVPNL…VLRALDSLLM (156 aa)). Cys-46 serves as the catalytic Cysteine sulfenic acid (-SOH) intermediate. Residues 191–214 (KKMFPQGFKTADLPSKKGYLRHTE) carry the Bipartite nuclear localization signal motif.

It belongs to the peroxiredoxin family. Prx6 subfamily. Predominantly expressed in seed. Expressed in endosperm, embryo and aleurone cells. Also detected in young seedlings, abscission zones, stem branching points.

It localises to the nucleus. Its subcellular location is the cytoplasm. The catalysed reaction is a hydroperoxide + [thioredoxin]-dithiol = an alcohol + [thioredoxin]-disulfide + H2O. In terms of biological role, thiol-specific peroxidase that catalyzes the reduction of hydrogen peroxide and organic hydroperoxides to water and alcohols, respectively. Seems to contribute to the inhibition of germination during stress. This chain is 1-Cys peroxiredoxin PER1 (PER1), found in Arabidopsis thaliana (Mouse-ear cress).